Reading from the N-terminus, the 391-residue chain is Na(+)/H(+) antiporter NhaA (391 aa).

Transmembrane regions (helical) follow at residues 14-34 (AGGILLLVAVVFAMLMANSPL), 59-79 (LLLWINDGLMALFFLLIGLEV), 95-115 (SLPSFAAIGGMLVPAGIYLLF), 124-144 (AGWAIPAATDIAFALGIMALL), 154-174 (VFLLALAIIDDLGVIVIIALF), 177-197 (SDLSTISLAIASVAILGLVGL), 213-233 (LILWVAVLKSGVHATLAGVII), 261-281 (FLILPVFAFANAGVALGNMSL), 290-310 (IGIALGLILGKPIGVMLFSFI), 328-348 (IAPVAAMCGIGFTMSMFIASL), and 363-383 (LGTLIGSFIAALVGYFWLSKV).

It belongs to the NhaA Na(+)/H(+) (TC 2.A.33) antiporter family.

It is found in the cell inner membrane. It catalyses the reaction Na(+)(in) + 2 H(+)(out) = Na(+)(out) + 2 H(+)(in). In terms of biological role, na(+)/H(+) antiporter that extrudes sodium in exchange for external protons. The sequence is that of Na(+)/H(+) antiporter NhaA from Shewanella putrefaciens (strain CN-32 / ATCC BAA-453).